A 121-amino-acid chain; its full sequence is Large ribosomal subunit protein uL18 (121 aa).

Belongs to the universal ribosomal protein uL18 family. As to quaternary structure, part of the 50S ribosomal subunit; part of the 5S rRNA/L5/L18/L25 subcomplex. Contacts the 5S and 23S rRNAs.

In terms of biological role, this is one of the proteins that bind and probably mediate the attachment of the 5S RNA into the large ribosomal subunit, where it forms part of the central protuberance. The sequence is that of Large ribosomal subunit protein uL18 from Herpetosiphon aurantiacus (strain ATCC 23779 / DSM 785 / 114-95).